Here is a 390-residue protein sequence, read N- to C-terminus: Anhydro-N-acetylmuramic acid kinase (390 aa).

9–16 contacts ATP; it reads GTSLDGID.

Belongs to the anhydro-N-acetylmuramic acid kinase family.

The enzyme catalyses 1,6-anhydro-N-acetyl-beta-muramate + ATP + H2O = N-acetyl-D-muramate 6-phosphate + ADP + H(+). Its pathway is amino-sugar metabolism; 1,6-anhydro-N-acetylmuramate degradation. It functions in the pathway cell wall biogenesis; peptidoglycan recycling. Catalyzes the specific phosphorylation of 1,6-anhydro-N-acetylmuramic acid (anhMurNAc) with the simultaneous cleavage of the 1,6-anhydro ring, generating MurNAc-6-P. Is required for the utilization of anhMurNAc either imported from the medium or derived from its own cell wall murein, and thus plays a role in cell wall recycling. This Bacillus cereus (strain ATCC 14579 / DSM 31 / CCUG 7414 / JCM 2152 / NBRC 15305 / NCIMB 9373 / NCTC 2599 / NRRL B-3711) protein is Anhydro-N-acetylmuramic acid kinase.